Here is a 478-residue protein sequence, read N- to C-terminus: Dynein regulatory complex subunit 4 (478 aa).

The span at 1 to 12 shows a compositional bias: basic residues; it reads MAPKKKGKKGKA. The tract at residues 1 to 33 is disordered; that stretch reads MAPKKKGKKGKAKGTPIVDGLAPEDMSKEQVEE. The regulates microtubule-binding stretch occupies residues 1–114; it reads MAPKKKGKKG…LLYEHQNNLT (114 aa). A microtubule-binding region spans residues 115–258; sequence EMKAEGTVVM…NSLKEQMEDM (144 aa). Positions 242-427 form a coiled coil; that stretch reads LNNLALINSL…KDLQYELAQV (186 aa). Positions 357-478 are interaction with SMO; that stretch reads QQKTGFKNLV…GPAGLVGTPT (122 aa).

It belongs to the DRC4 family. Component of the nexin-dynein regulatory complex (N-DRC). Interacts with microtubules. Interacts with SMO. Interacts (via coiled-coil domains) with RAB3B (in GTP-bound form). Interacts with DRC1. Interacts with DRC7. In terms of tissue distribution, expressed in respiratory epithelial cells (at protein level). Expressed in the heart, skeletal muscle, pancreas, liver, brain, trachea and lung. Weakly or not expressed in placenta and kidney.

It is found in the cytoplasm. Its subcellular location is the cytoskeleton. It localises to the cell projection. The protein localises to the cilium. The protein resides in the flagellum. It is found in the cilium axoneme. Its subcellular location is the cilium basal body. It localises to the golgi apparatus. The protein localises to the flagellum axoneme. Component of the nexin-dynein regulatory complex (N-DRC), a key regulator of ciliary/flagellar motility which maintains the alignment and integrity of the distal axoneme and regulates microtubule sliding in motile axonemes. Plays an important role in the assembly of the N-DRC linker. Plays dual roles at both the primary (or non-motile) cilia to regulate hedgehog signaling and in motile cilia to coordinate cilia movement. Required for proper motile cilia functioning. Positively regulates ciliary smoothened (SMO)-dependent Hedgehog (Hh) signaling pathway by facilitating the trafficking of SMO into the cilium and the stimulation of SMO activity in a GRK2-dependent manner. This is Dynein regulatory complex subunit 4 (GAS8) from Homo sapiens (Human).